The chain runs to 258 residues: Phosphate import ATP-binding protein PstB (258 aa).

One can recognise an ABC transporter domain in the interval 13–253 (IEVENLNLWY…PKEQSTEDYI (241 aa)). Position 45–52 (45–52 (GPSGCGKS)) interacts with ATP.

Belongs to the ABC transporter superfamily. Phosphate importer (TC 3.A.1.7) family. In terms of assembly, the complex is composed of two ATP-binding proteins (PstB), two transmembrane proteins (PstC and PstA) and a solute-binding protein (PstS).

Its subcellular location is the cell membrane. It carries out the reaction phosphate(out) + ATP + H2O = ADP + 2 phosphate(in) + H(+). In terms of biological role, part of the ABC transporter complex PstSACB involved in phosphate import. Responsible for energy coupling to the transport system. The chain is Phosphate import ATP-binding protein PstB from Methanosarcina acetivorans (strain ATCC 35395 / DSM 2834 / JCM 12185 / C2A).